Consider the following 1357-residue polypeptide: DNA-directed RNA polymerase subunit beta (1357 aa).

Belongs to the RNA polymerase beta chain family. In terms of assembly, the RNAP catalytic core consists of 2 alpha, 1 beta, 1 beta' and 1 omega subunit. When a sigma factor is associated with the core the holoenzyme is formed, which can initiate transcription.

It catalyses the reaction RNA(n) + a ribonucleoside 5'-triphosphate = RNA(n+1) + diphosphate. Its function is as follows. DNA-dependent RNA polymerase catalyzes the transcription of DNA into RNA using the four ribonucleoside triphosphates as substrates. This Nitrosospira multiformis (strain ATCC 25196 / NCIMB 11849 / C 71) protein is DNA-directed RNA polymerase subunit beta.